The primary structure comprises 296 residues: NAD kinase (296 aa).

Residue Asp-73 is the Proton acceptor of the active site. NAD(+) contacts are provided by residues Asp-73–Gly-74, Lys-78, Asn-151–Glu-152, Arg-178, Asp-180, and Thr-191–Ser-196.

The protein belongs to the NAD kinase family. Requires a divalent metal cation as cofactor.

Its subcellular location is the cytoplasm. It carries out the reaction NAD(+) + ATP = ADP + NADP(+) + H(+). Functionally, involved in the regulation of the intracellular balance of NAD and NADP, and is a key enzyme in the biosynthesis of NADP. Catalyzes specifically the phosphorylation on 2'-hydroxyl of the adenosine moiety of NAD to yield NADP. This Francisella tularensis subsp. mediasiatica (strain FSC147) protein is NAD kinase.